A 1121-amino-acid polypeptide reads, in one-letter code: Cilia- and flagella-associated protein 70 (1121 aa).

Residues 410–428 are compositionally biased toward basic and acidic residues; sequence NLKEDKPVKEKDIDGRPRP. A disordered region spans residues 410–457; the sequence is NLKEDKPVKEKDIDGRPRPGDVQAPSIKSQSSDTPLEGEPPLSHNPEG. TPR repeat units follow at residues 635–668, 669–702, and 704–736; these read SEQL…EPQN, LDHW…NQSH, and HSLL…EPTN. 2 disordered regions span residues 778 to 802 and 836 to 858; these read KQKS…PWGI and QSDS…QKPS. TPR repeat units lie at residues 929–962, 963–996, 1000–1033, 1035–1066, and 1068–1100; these read CEYY…DYLN, PNVW…VVDA, HFIF…SPSC, TWLG…NNYN, and EVWA…KLKD.

The protein belongs to the CFAP70 family. In terms of tissue distribution, expressed in testis.

Its subcellular location is the cell projection. The protein localises to the cilium. It is found in the flagellum. The protein resides in the cytoplasm. It localises to the cytoskeleton. Its subcellular location is the flagellum basal body. The protein localises to the cilium axoneme. Functionally, axoneme-binding protein that plays a role in the regulation of ciliary motility and cilium length. This Homo sapiens (Human) protein is Cilia- and flagella-associated protein 70.